The sequence spans 323 residues: Peroxisomal targeting signal 2 receptor (323 aa).

WD repeat units lie at residues 65–96 (DWNDGLFDVTWSENNEHVLITCSGDGSLQLWD), 109–141 (EHAQEVYSVDWSQTRGEQLVVSGSWDQTVKLWD), 153–184 (GHESIIYSTIWSPHIPGCFASASGDQTLRIWD), 196–227 (AHQAEILSCDWCKYNENLLVTGAVDCSLRGWD), 240–271 (GHTYAIRRVKFSPFHASVLASCSYDFTVRFWN), and 284–315 (HHTEFTCGLDFSLQSPTQVADCSWDETIKIYD).

This sequence belongs to the WD repeat peroxin-7 family. Interacts with PEX5; interaction only takes place when PEX7 is associated with cargo proteins. Interacts with VWA8. Ubiquitous. Highest expression in pancreas, skeletal muscle and heart.

The protein resides in the cytoplasm. It localises to the cytosol. It is found in the peroxisome matrix. Functionally, receptor required for the peroxisomal import of proteins containing a C-terminal PTS2-type peroxisomal targeting signal. Specifically binds to cargo proteins containing a PTS2 peroxisomal targeting signal in the cytosol. Cargo protein-binding triggers interaction with PEX5 and formation of a ternary complex composed of PEX5 and PEX7 along with PTS2-containing cargo proteins, which is tranlocated into peroxisomes by passing through the PEX13-PEX14 docking complex. The chain is Peroxisomal targeting signal 2 receptor from Homo sapiens (Human).